Here is a 158-residue protein sequence, read N- to C-terminus: Interleukin-17A (158 aa).

The first 25 residues, 1–25, serve as a signal peptide directing secretion; it reads MSPGRASSVSLMLLLLLSLAATVKA. Asn71 is a glycosylation site (N-linked (GlcNAc...) asparagine). 2 cysteine pairs are disulfide-bonded: Cys97-Cys147 and Cys102-Cys149.

This sequence belongs to the IL-17 family. Homodimer. Forms complexes with IL17RA and IL17RC receptors with 2:1 binding stoichiometry: two receptor chains for one interleukin molecule. IL17A homodimer preferentially drives the formation of IL17RA-IL17RC heterodimeric receptor complex. IL17A homodimer adopts an asymmetrical ternary structure with one IL17RA molecule, allowing for high affinity interactions of one IL17A monomer with one IL17RA molecule (via D1 and D2 domains), while disfavoring binding of a second IL17RA molecule on the other IL17A monomer. Heterodimer with IL17F. IL17A-IL17F forms complexes with IL17RA-IL17RC, but with lower affinity when compared to IL17A homodimer. IL17RA and IL17RC chains cannot distinguish between IL17A and IL17F molecules, potentially enabling the formation of topologically distinct complexes. In terms of tissue distribution, expressed by Th17 cell lineage (at protein level). The expression pattern reflects the differentiation state, with IL17A-IL17F heterodimers produced at higher levels than IL17A-IL17A and IL17F-IL17F dimers in fully differentiated Th17 cells. Expressed in innate lymphoid cells (at protein level). Expressed in gamma-delta T cell subsets (at protein level). Expressed in iNKT cells (at protein level).

The protein resides in the secreted. Functionally, effector cytokine of innate and adaptive immune system involved in antimicrobial host defense and maintenance of tissue integrity. Signals via IL17RA-IL17RC heterodimeric receptor complex, triggering homotypic interaction of IL17RA and IL17RC chains with TRAF3IP2 adapter. This leads to downstream TRAF6-mediated activation of NF-kappa-B and MAPkinase pathways ultimately resulting in transcriptional activation of cytokines, chemokines, antimicrobial peptides and matrix metalloproteinases, with potential strong immune inflammation. Plays an important role in connecting T cell-mediated adaptive immunity and acute inflammatory response to destroy extracellular bacteria and fungi. As a signature effector cytokine of T-helper 17 cells (Th17), primarily induces neutrophil activation and recruitment at infection and inflammatory sites. In airway epithelium, mediates neutrophil chemotaxis via induction of CXCL1 and CXCL5 chemokines. In secondary lymphoid organs, contributes to germinal center formation by regulating the chemotactic response of B cells to CXCL12 and CXCL13, enhancing retention of B cells within the germinal centers, B cell somatic hypermutation rate and selection toward plasma cells. Effector cytokine of a subset of gamma-delta T cells that functions as part of an inflammatory circuit downstream IL1B, TLR2 and IL23A-IL12B to promote neutrophil recruitment for efficient bacterial clearance. Effector cytokine of innate immune cells including invariant natural killer cell (iNKT) and group 3 innate lymphoid cells that mediate initial neutrophilic inflammation. Involved in the maintenance of the integrity of epithelial barriers during homeostasis and pathogen infection. Upon acute injury, has a direct role in epithelial barrier formation by regulating OCLN localization and tight junction biogenesis. As part of the mucosal immune response induced by commensal bacteria, enhances host's ability to resist pathogenic bacterial and fungal infections by promoting neutrophil recruitment and antimicrobial peptides release. In synergy with IL17F, mediates the production of antimicrobial beta-defensins DEFB1, DEFB103A, and DEFB104A by mucosal epithelial cells, limiting the entry of microbes through the epithelial barriers. Involved in antiviral host defense through various mechanisms. Enhances immunity against West Nile virus by promoting T cell cytotoxicity. May play a beneficial role in influenza A virus (H5N1) infection by enhancing B cell recruitment and immune response in the lung. Contributes to influenza A virus (H1N1) clearance by driving the differentiation of B-1a B cells, providing for production of virus-specific IgM antibodies at first line of host defense. This chain is Interleukin-17A (Il17a), found in Mus musculus (Mouse).